The chain runs to 188 residues: Pro-adrenomedullin (188 aa).

A signal peptide spans 1-21 (MKLVPVALLYLGSLAFLGADT). Arginine 41 is modified (arginine amide). Residues 45–92 (ELRVSSSYPTGLAEVKAGPAQTLIRTQDVKGASRNPQTSGPDAARIRV) constitute a propeptide that is removed on maturation. Residues cysteine 110 and cysteine 115 are joined by a disulfide bond. The disordered stretch occupies residues 131 to 176 (DKDGVAPRSKISPQGYGRRRRRSLPEPGLRRTLLFPEPRPGGAPAP). Tyrosine 146 carries the post-translational modification Tyrosine amide. A propeptide spans 153–188 (SLPEPGLRRTLLFPEPRPGGAPAPRAHQVLANLLKM) (preproAM C-terminal fragment).

It belongs to the adrenomedullin family.

The protein localises to the secreted. Functionally, adrenomedullin/ADM and proadrenomedullin N-20 terminal peptide/PAMP are peptide hormones that act as potent hypotensive and vasodilatator agents. Numerous actions have been reported most related to the physiologic control of fluid and electrolyte homeostasis. In terms of biological role, ADM function is mediated by the CALCRL-RAMP2 and CALCRL-RAMP3 receptor complexes with ADM showing the highest potency for the CALCRL-RAMP2 complex. This Canis lupus familiaris (Dog) protein is Pro-adrenomedullin (ADM).